A 231-amino-acid polypeptide reads, in one-letter code: 7-cyano-7-deazaguanine synthase (231 aa).

8–18 (FSGGQDSTTCL) lines the ATP pocket. Zn(2+) is bound by residues C188, C197, C200, and C203.

The protein belongs to the QueC family. Requires Zn(2+) as cofactor.

The enzyme catalyses 7-carboxy-7-deazaguanine + NH4(+) + ATP = 7-cyano-7-deazaguanine + ADP + phosphate + H2O + H(+). It functions in the pathway purine metabolism; 7-cyano-7-deazaguanine biosynthesis. Functionally, catalyzes the ATP-dependent conversion of 7-carboxy-7-deazaguanine (CDG) to 7-cyano-7-deazaguanine (preQ(0)). The protein is 7-cyano-7-deazaguanine synthase of Sodalis glossinidius (strain morsitans).